Reading from the N-terminus, the 21-residue chain is Peptide PGLa-R6 (21 aa).

Residue Leu21 is modified to Leucine amide.

As to expression, expressed by the skin glands.

Its subcellular location is the secreted. Its function is as follows. Antimicrobial peptide. This chain is Peptide PGLa-R6, found in Xenopus ruwenzoriensis (Uganda clawed frog).